Reading from the N-terminus, the 126-residue chain is MEFPSNVKYTKEHEWIRVEGDIAYVGITDYAQEQLGDIVFVDITTEGETLEKDEVFGTIEVVKTISDLFLPVSGEVLEQNEALADNPELVNQDPYGKGWLIKIKPNDSNDVNDLLDAEGYKALVNE.

The region spanning 22–104 is the Lipoyl-binding domain; the sequence is IAYVGITDYA…YGKGWLIKIK (83 aa). Lys63 bears the N6-lipoyllysine mark.

It belongs to the GcvH family. In terms of assembly, the glycine cleavage system is composed of four proteins: P, T, L and H. The cofactor is (R)-lipoate.

Functionally, the glycine cleavage system catalyzes the degradation of glycine. The H protein shuttles the methylamine group of glycine from the P protein to the T protein. This chain is Glycine cleavage system H protein, found in Phocaeicola vulgatus (strain ATCC 8482 / DSM 1447 / JCM 5826 / CCUG 4940 / NBRC 14291 / NCTC 11154) (Bacteroides vulgatus).